We begin with the raw amino-acid sequence, 493 residues long: D-glyceraldehyde dehydrogenase (NADP(+)) (493 aa).

A coiled-coil region spans residues Arg70–Lys92. NADP(+) is bound by residues Thr146 to Asn149, Arg157, Lys172 to Asp176, Arg204 to Asp210, Gly225 to Leu248, Cys281, and Glu381 to Phe383. The substrate site is built by Asn149 and Arg157. Residue Glu247 is the Proton acceptor of the active site. Cys281 is a substrate binding site. Catalysis depends on Cys281, which acts as the Proton donor.

Belongs to the aldehyde dehydrogenase family. Glyceraldehyde dehydrogenase subfamily. As to quaternary structure, homotetramer. Dimer of dimers.

It catalyses the reaction D-glyceraldehyde + NADP(+) + H2O = (R)-glycerate + NADPH + 2 H(+). Its pathway is carbohydrate degradation; glycolysis. Inhibited by calcium, cadmium, copper and mercury ions. Stable for 2 hours at 60 degrees Celsius but activity is decreased to less than 50 percent within 20 minutes at 80 degrees Celsius. Two folds activity enhancement in the presence of 1 mM glutathione, DTT, or 2-mercaptoethanol. Complete activity inhibition by thiol-modifying reagents such as p-chloromercuribenzoic acid or p-hydroxy-mercuribenzoic acid. Its function is as follows. NADP-dependent dehydrogenase of the nED (non-phosphorylated Entner-Doudoroff) pathway with highest activity towards glyceraldehydes (e.g. D,L-glyceraldehyde and D-glyceraldehyde), to a lesser extent towards D,L-glyceraldehyde-3-phosphate and glycolaldehyde, but no activity towards aliphatic or aromatic aldehydes. The sequence is that of D-glyceraldehyde dehydrogenase (NADP(+)) from Thermoplasma acidophilum (strain ATCC 25905 / DSM 1728 / JCM 9062 / NBRC 15155 / AMRC-C165).